Here is a 295-residue protein sequence, read N- to C-terminus: MKPTYCGYAAIIGRPNVGKSTLLNQLLGQKISITSRKPQTTRYQILGVKTFKDIQVIYVDTPGLHAGTERTINRYMNRTARGALRDVDAIVFVIEPHWESQDAWVLDNLKEIETPVFLVINKVDKIKNRAELLPLIEKVSSLYAFQKIIPLSAKTGDQVGTLEQAVHQLMPESPFYFPPEQVTDRSDQFMASEIIREKLMRLLGQEIPYSLAVTLIEFRKEEKIIRISAVIWVEKKSQKGIVIGKGGERLKRVGTNARLDMEKWFGKKVFLQLWVKVKSGWADNERLLRELGFEE.

The region spanning 5-172 (YCGYAAIIGR…EQAVHQLMPE (168 aa)) is the Era-type G domain. The G1 stretch occupies residues 13 to 20 (GRPNVGKS). 13-20 (GRPNVGKS) provides a ligand contact to GTP. The tract at residues 39 to 43 (QTTRY) is G2. Residues 60 to 63 (DTPG) are G3. GTP is bound by residues 60 to 64 (DTPGL) and 121 to 124 (NKVD). The G4 stretch occupies residues 121-124 (NKVD). Residues 151–153 (LSA) are G5. The KH type-2 domain maps to 203–279 (LGQEIPYSLA…FLQLWVKVKS (77 aa)).

The protein belongs to the TRAFAC class TrmE-Era-EngA-EngB-Septin-like GTPase superfamily. Era GTPase family. Monomer.

The protein resides in the cytoplasm. Its subcellular location is the cell inner membrane. An essential GTPase that binds both GDP and GTP, with rapid nucleotide exchange. Plays a role in 16S rRNA processing and 30S ribosomal subunit biogenesis and possibly also in cell cycle regulation and energy metabolism. The polypeptide is GTPase Era (Coxiella burnetii (strain CbuK_Q154) (Coxiella burnetii (strain Q154))).